A 428-amino-acid polypeptide reads, in one-letter code: Ribosomal RNA small subunit methyltransferase B (428 aa).

S-adenosyl-L-methionine-binding positions include 253 to 259 (CAAPGGK), Asp-276, Asp-302, and Asp-321. Cys-374 functions as the Nucleophile in the catalytic mechanism.

Belongs to the class I-like SAM-binding methyltransferase superfamily. RsmB/NOP family.

It localises to the cytoplasm. It carries out the reaction cytidine(967) in 16S rRNA + S-adenosyl-L-methionine = 5-methylcytidine(967) in 16S rRNA + S-adenosyl-L-homocysteine + H(+). In terms of biological role, specifically methylates the cytosine at position 967 (m5C967) of 16S rRNA. The chain is Ribosomal RNA small subunit methyltransferase B from Enterobacter sp. (strain 638).